Consider the following 296-residue polypeptide: CCAAT/enhancer-binding protein beta (296 aa).

The tract at residues 1-22 is required for Lys-133 sumoylation; that stretch reads MHRLLAWDAACLPPPPAAFRPM. Arg-3 is subject to Asymmetric dimethylarginine; by CARM1. The interval 22-104 is required for MYC transcriptional repression; the sequence is MEVANFYYEP…YGAKPSKKPA (83 aa). Lys-39 bears the N6-acetyllysine; alternate mark. An N6-methylated lysine; alternate modification is found at Lys-39. Residues Lys-98 and Lys-101 each carry the N6-acetyllysine; by KAT2A and KAT2B modification. The residue at position 102 (Lys-102) is an N6-acetyllysine; by KAT2A and KAT2B; alternate. Glycyl lysine isopeptide (Lys-Gly) (interchain with G-Cter in SUMO2); alternate cross-links involve residues Lys-102 and Lys-133. Residue Lys-133 forms a Glycyl lysine isopeptide (Lys-Gly) (interchain with G-Cter in SUMO); alternate linkage. A Glycyl lysine isopeptide (Lys-Gly) (interchain with G-Cter in SUMO2) cross-link involves residue Lys-144. The disordered stretch occupies residues 171–199; that stretch reads SGSSGSLSTSSSSSPPGTPSPADAKAAPA. The residue at position 179 (Thr-179) is a Phosphothreonine; by GSK3-beta. O-linked (GlcNAc) serine glycans are attached at residues Ser-180 and Ser-181. Ser-184 bears the Phosphoserine; by GSK3-beta mark. Position 188 is a phosphothreonine; by RPS6KA1, CDK2 and MAPK (Thr-188). Residues Lys-211 and Lys-213 each participate in a glycyl lysine isopeptide (Lys-Gly) (interchain with G-Cter in SUMO2) cross-link. Thr-217 carries the post-translational modification Phosphothreonine; by RPS6KA1 and PKC/PRKCA. A bZIP domain is found at 222 to 285; it reads SDEYKMRRER…STLRNLFKQL (64 aa). Residues 226-246 are basic motif; sequence KMRRERNNIAVRKSRDKAKMR. Ser-239 is modified (phosphoserine; by PKC/PRKCA). Residues 248 to 255 form a leucine-zipper region; that stretch reads LETQHKVL. Residue Ser-276 is modified to Phosphoserine; by CaMK2. Lys-283 is covalently cross-linked (Glycyl lysine isopeptide (Lys-Gly) (interchain with G-Cter in SUMO2)).

It belongs to the bZIP family. C/EBP subfamily. Binds DNA as a homodimer and as a heterodimer. Interacts with ATF4. Binds DNA as a heterodimer with ATF4. Interacts with MYB; within the complex, MYB and CEBPB bind to different promoter regions. Can form stable heterodimers with CEBPA, CEBPD and CEBPE. Interacts with SIX1. Isoform 2 and isoform 3 also form heterodimers. Interacts with TRIM28 and PTGES2. Interacts with PRDM16. Interacts with CCDC85B. Forms a complex with THOC5. Interacts with ZNF638; this interaction increases transcriptional activation. Interacts with CIDEA and CIDEC. Interaction with CIDEA increases transcriptional activation of a subset of CEBPB downstream target genes, including ID2, IGF1, PRLR, SOCS1, SOCS3, XDH. Interaction with CIDEC increases transcriptional activation of SOCS1, SOCS3, TGFB1, TGFBR1, ID2 and XDH. Interacts with DDIT3/CHOP. Interacts with EP300; recruits EP300 to chromatin. Interacts with RORA; the interaction disrupts interaction with EP300. Interacts (not methylated) with MED23, MED26, SMARCA2, SMARCB1 and SMARCC1. Interacts with KAT2A and KAT2B. Interacts with ATF5; EP300 is required for ATF5 and CEBPB interaction and DNA binding. Interacts with NFE2L1; the heterodimer represses expression of DSPP during odontoblast differentiation. In terms of processing, sumoylated by polymeric chains of SUMO2 or SUMO3. Sumoylation at Lys-133 is required for inhibition of T-cells proliferation. In adipocytes, sumoylation at Lys-133 by PIAS1 leads to ubiquitination and subsequent proteasomal degradation. Desumoylated by SENP2, which abolishes ubiquitination and stabilizes protein levels. Ubiquitinated, leading to proteasomal degradation. Post-translationally, phosphorylated at Thr-188 by MAPK and CDK2, serves to prime phosphorylation at Thr-179 and Ser-184 by GSK3B and acquire DNA-binding as well as transactivation activities, required to induce adipogenesis. MAPK and CDK2 act sequentially to maintain Thr-188 in the primed phosphorylated state during mitotical cloning expansion and thereby progression of terminal differentiation. Phosphorylation at Thr-217 enhances transactivation activity. Phosphorylation at Ser-276 in response to calcium increases transactivation activity. Phosphorylated at Thr-188 by RPS6KA1. In terms of processing, O-glycosylated, glycosylation at Ser-180 and Ser-181 prevents phosphorylation on Thr-188, Ser-184 and Thr-179 and DNA binding activity which delays the adipocyte differentiation program. Acetylated. Acetylation at Lys-39 is an important and dynamic regulatory event that contributes to its ability to transactivate target genes, including those associated with adipogenesis and adipocyte function. Deacetylation by HDAC1 represses its transactivation activity. Acetylated by KAT2A and KAT2B within a cluster of lysine residues between amino acids 98-102, this acetylation is strongly induced by glucocorticoid treatment and enhances transactivation activity. Post-translationally, methylated. Methylation at Arg-3 by CARM1 and at Lys-39 by EHMT2, inhibits transactivation activity. Methylation is probably inhibited by phosphorylation at Thr-188. As to expression, abundantly expressed in myoblasts. Enriched in brown adipose tissue (BAT) versus white adipose tissue (WAT). Expressed in hepatocytes (at protein level). Expressed in T lymphocytes. The expression in granulosa cells of antral follicles is induced by luteinizing hormone. Expressed in chondrocytes and osteoblasts (at protein level).

It is found in the nucleus. The protein localises to the cytoplasm. Its function is as follows. Important transcription factor regulating the expression of genes involved in immune and inflammatory responses. Also plays a significant role in adipogenesis, as well as in the gluconeogenic pathway, liver regeneration, and hematopoiesis. The consensus recognition site is 5'-T[TG]NNGNAA[TG]-3'. Its functional capacity is governed by protein interactions and post-translational protein modifications. During early embryogenesis, plays essential and redundant roles with CEBPA. Has a promitotic effect on many cell types such as hepatocytes and adipocytes but has an antiproliferative effect on T-cells by repressing MYC expression, facilitating differentiation along the T-helper 2 lineage. Binds to regulatory regions of several acute-phase and cytokines genes and plays a role in the regulation of acute-phase reaction and inflammation. Also plays a role in intracellular bacteria killing. During adipogenesis, is rapidly expressed and, after activation by phosphorylation, induces CEBPA and PPARG, which turn on the series of adipocyte genes that give rise to the adipocyte phenotype. The delayed transactivation of the CEBPA and PPARG genes by CEBPB appears necessary to allow mitotic clonal expansion and thereby progression of terminal differentiation. Essential for female reproduction because of a critical role in ovarian follicle development. Restricts osteoclastogenesis. Together with NFE2L1; represses expression of DSPP during odontoblast differentiation. Essential for gene expression induction in activated macrophages. Plays a major role in immune responses such as CD4(+) T-cell response, granuloma formation and endotoxin shock. Not essential for intracellular bacteria killing. In terms of biological role, acts as a dominant negative through heterodimerization with isoform 2. Promotes osteoblast differentiation and osteoclastogenesis. In Mus musculus (Mouse), this protein is CCAAT/enhancer-binding protein beta.